Here is an 801-residue protein sequence, read N- to C-terminus: Ribosome biogenesis protein ERB1 (801 aa).

2 disordered regions span residues 1–135 (MGSK…LEDR) and 358–377 (PEYLPTKEEREEWEKMDPED). Positions 35 to 90 (SEDEEDYIPSSEVDEDDDDDADESASEDSDDSNDSEDDEVEEDDEALLSDEIPSEG) are enriched in acidic residues. Composition is skewed to basic and acidic residues over residues 91 to 113 (ESEKDQDLAESKESKQDQDKEPS), 124 to 135 (PPRKEDEELEDR), and 362 to 377 (PTKEEREEWEKMDPED). WD repeat units lie at residues 451 to 490 (GHEGRVRSVAIDPTGVALATGGDDGTVRVWELLTGRQVWS) and 494 to 534 (NGDE…VTPA). The disordered stretch occupies residues 546–570 (GFGHATNGKQQANLPPGKEPPGKWA). 5 WD repeats span residues 586–628 (TVRS…TQIP), 631–669 (KLNGLAQTASFHPLRPLFFVATQRSIRCYDLQKLELVKI), 672–711 (PGAKWISSFDVHPGGDNLVVGSYDKRLLWHDLDLSNRPYK), 715–755 (FHTE…DQLE), and 771–801 (VNKLGVLDIDWHPREPWCVSAGADGTARLWM).

Belongs to the WD repeat BOP1/ERB1 family. As to quaternary structure, component of the NOP7 complex, composed of ERB1, NOP7 and YTM1. The complex is held together by ERB1, which interacts with NOP7 via its N-terminal domain and with YTM1 via a high-affinity interaction between the seven-bladed beta-propeller domains of the 2 proteins. The NOP7 complex associates with the 66S pre-ribosome.

The protein localises to the nucleus. Its subcellular location is the nucleolus. It is found in the nucleoplasm. In terms of biological role, component of the NOP7 complex, which is required for maturation of the 25S and 5.8S ribosomal RNAs and formation of the 60S ribosome. The protein is Ribosome biogenesis protein ERB1 of Chaetomium thermophilum (strain DSM 1495 / CBS 144.50 / IMI 039719) (Thermochaetoides thermophila).